The following is a 218-amino-acid chain: Sulfite reductase, assimilatory-type (218 aa).

[4Fe-4S] cluster-binding residues include cysteine 91, cysteine 97, cysteine 131, and cysteine 135. Position 135 (cysteine 135) interacts with siroheme.

This enzyme catalyzes the 6-electron reduction of sulfite to sulfide. This is one of several activities required for the biosynthesis of L-cysteine from sulfate. This is Sulfite reductase, assimilatory-type from Nitratidesulfovibrio vulgaris (strain ATCC 29579 / DSM 644 / CCUG 34227 / NCIMB 8303 / VKM B-1760 / Hildenborough) (Desulfovibrio vulgaris).